A 71-amino-acid chain; its full sequence is Small ribosomal subunit protein bS21 (71 aa).

The span at 50–59 (AAAVKRHAKK) shows a compositional bias: basic residues. The disordered stretch occupies residues 50-71 (AAAVKRHAKKVQREQRRAVRLY). Over residues 60-71 (VQREQRRAVRLY) the composition is skewed to basic and acidic residues.

This sequence belongs to the bacterial ribosomal protein bS21 family.

The chain is Small ribosomal subunit protein bS21 from Pseudomonas fluorescens (strain ATCC BAA-477 / NRRL B-23932 / Pf-5).